Reading from the N-terminus, the 669-residue chain is GTP-binding protein 1 (669 aa).

Residues 1 to 32 (MATERSRSAMDSPVPASMFAPEPSSPGAARAA) form a disordered region. A phosphoserine mark is found at serine 6, serine 8, serine 12, serine 24, serine 25, serine 44, serine 47, and serine 69. The region spanning 158–389 (FLEVRVAVVG…LNLLSPRTSY (232 aa)) is the tr-type G domain. Residues 167 to 174 (GNVDAGKS) are G1. 167 to 174 (GNVDAGKS) is a GTP binding site. Residues 206–210 (GRTSS) are G2. The interval 252 to 255 (DLAG) is G3. Residues 252–256 (DLAGH) and 308–311 (TKID) each bind GTP. A G4 region spans residues 308-311 (TKID). Positions 366–368 (SNV) are G5. The span at 573–595 (LLQTTNNSPMNSKPQQIKMQSTK) shows a compositional bias: polar residues. The interval 573–669 (LLQTTNNSPM…GACVTPASGC (97 aa)) is disordered. Phosphoserine is present on serine 580. The span at 646-657 (GRRRGGQRHKVK) shows a compositional bias: basic residues.

It belongs to the TRAFAC class translation factor GTPase superfamily. Classic translation factor GTPase family. GTPBP1 subfamily. As to quaternary structure, interacts with EXOSC2/RRP4, EXOSC3/RRP40, EXOSC5/RRP46, HNRNPD, HNRNPR and SYNCRIP. Identified in a complex with AANAT mRNA, but does not bind mRNA by itself.

The protein localises to the cytoplasm. In terms of biological role, promotes degradation of target mRNA species. Plays a role in the regulation of circadian mRNA stability. Binds GTP and has GTPase activity. The polypeptide is GTP-binding protein 1 (GTPBP1) (Homo sapiens (Human)).